Here is a 303-residue protein sequence, read N- to C-terminus: Recombination-associated protein RdgC (303 aa).

It belongs to the RdgC family.

The protein resides in the cytoplasm. It localises to the nucleoid. May be involved in recombination. This is Recombination-associated protein RdgC from Aeromonas hydrophila subsp. hydrophila (strain ATCC 7966 / DSM 30187 / BCRC 13018 / CCUG 14551 / JCM 1027 / KCTC 2358 / NCIMB 9240 / NCTC 8049).